Consider the following 174-residue polypeptide: NADH-quinone oxidoreductase subunit C (174 aa).

It belongs to the complex I 30 kDa subunit family. NDH-1 is composed of 14 different subunits. Subunits NuoB, C, D, E, F, and G constitute the peripheral sector of the complex.

It is found in the cell membrane. The enzyme catalyses a quinone + NADH + 5 H(+)(in) = a quinol + NAD(+) + 4 H(+)(out). In terms of biological role, NDH-1 shuttles electrons from NADH, via FMN and iron-sulfur (Fe-S) centers, to quinones in the respiratory chain. The immediate electron acceptor for the enzyme in this species is believed to be ubiquinone. Couples the redox reaction to proton translocation (for every two electrons transferred, four hydrogen ions are translocated across the cytoplasmic membrane), and thus conserves the redox energy in a proton gradient. The sequence is that of NADH-quinone oxidoreductase subunit C from Roseiflexus castenholzii (strain DSM 13941 / HLO8).